The sequence spans 546 residues: Chaperonin GroEL (546 aa).

Residues 29-32 (TMGP), lysine 50, 86-90 (DGTTT), glycine 414, and aspartate 492 each bind ATP.

Belongs to the chaperonin (HSP60) family. In terms of assembly, forms a cylinder of 14 subunits composed of two heptameric rings stacked back-to-back. Interacts with the co-chaperonin GroES.

It localises to the cytoplasm. The enzyme catalyses ATP + H2O + a folded polypeptide = ADP + phosphate + an unfolded polypeptide.. Its function is as follows. Together with its co-chaperonin GroES, plays an essential role in assisting protein folding. The GroEL-GroES system forms a nano-cage that allows encapsulation of the non-native substrate proteins and provides a physical environment optimized to promote and accelerate protein folding. The polypeptide is Chaperonin GroEL (Helicobacter pylori (strain P12)).